The sequence spans 268 residues: 4-hydroxy-tetrahydrodipicolinate reductase (268 aa).

8–13 (GAAGRM) contributes to the NAD(+) binding site. Arg-36 contacts NADP(+). Residues 99-101 (GTT) and 123-126 (AANF) each bind NAD(+). His-156 acts as the Proton donor/acceptor in catalysis. His-157 serves as a coordination point for (S)-2,3,4,5-tetrahydrodipicolinate. Catalysis depends on Lys-160, which acts as the Proton donor. 166–167 (GT) contributes to the (S)-2,3,4,5-tetrahydrodipicolinate binding site.

The protein belongs to the DapB family.

The protein resides in the cytoplasm. The catalysed reaction is (S)-2,3,4,5-tetrahydrodipicolinate + NAD(+) + H2O = (2S,4S)-4-hydroxy-2,3,4,5-tetrahydrodipicolinate + NADH + H(+). It carries out the reaction (S)-2,3,4,5-tetrahydrodipicolinate + NADP(+) + H2O = (2S,4S)-4-hydroxy-2,3,4,5-tetrahydrodipicolinate + NADPH + H(+). Its pathway is amino-acid biosynthesis; L-lysine biosynthesis via DAP pathway; (S)-tetrahydrodipicolinate from L-aspartate: step 4/4. Functionally, catalyzes the conversion of 4-hydroxy-tetrahydrodipicolinate (HTPA) to tetrahydrodipicolinate. The sequence is that of 4-hydroxy-tetrahydrodipicolinate reductase from Pseudomonas fluorescens (strain Pf0-1).